The following is a 499-amino-acid chain: Lysine--tRNA ligase (499 aa).

2 residues coordinate Mg(2+): glutamate 409 and glutamate 416.

It belongs to the class-II aminoacyl-tRNA synthetase family. Homodimer. It depends on Mg(2+) as a cofactor.

Its subcellular location is the cytoplasm. The catalysed reaction is tRNA(Lys) + L-lysine + ATP = L-lysyl-tRNA(Lys) + AMP + diphosphate. This Pseudomonas fluorescens (strain Pf0-1) protein is Lysine--tRNA ligase.